The following is a 232-amino-acid chain: A-type ATP synthase subunit D (232 aa).

The protein belongs to the V-ATPase D subunit family. Has multiple subunits with at least A(3), B(3), C, D, E, F, H, I and proteolipid K(x).

It is found in the cell membrane. Functionally, component of the A-type ATP synthase that produces ATP from ADP in the presence of a proton gradient across the membrane. This chain is A-type ATP synthase subunit D, found in Methanopyrus kandleri (strain AV19 / DSM 6324 / JCM 9639 / NBRC 100938).